The chain runs to 375 residues: Queuine tRNA-ribosyltransferase (375 aa).

The active-site Proton acceptor is D94. Substrate is bound by residues 94–98 (DSGGF), D148, Q191, and G218. The segment at 249-255 (GVGSPDD) is RNA binding. D268 acts as the Nucleophile in catalysis. The tract at residues 273–277 (TRIAR) is RNA binding; important for wobble base 34 recognition. 4 residues coordinate Zn(2+): C306, C308, C311, and H337.

Belongs to the queuine tRNA-ribosyltransferase family. Homodimer. Within each dimer, one monomer is responsible for RNA recognition and catalysis, while the other monomer binds to the replacement base PreQ1. The cofactor is Zn(2+).

It catalyses the reaction 7-aminomethyl-7-carbaguanine + guanosine(34) in tRNA = 7-aminomethyl-7-carbaguanosine(34) in tRNA + guanine. It functions in the pathway tRNA modification; tRNA-queuosine biosynthesis. In terms of biological role, catalyzes the base-exchange of a guanine (G) residue with the queuine precursor 7-aminomethyl-7-deazaguanine (PreQ1) at position 34 (anticodon wobble position) in tRNAs with GU(N) anticodons (tRNA-Asp, -Asn, -His and -Tyr). Catalysis occurs through a double-displacement mechanism. The nucleophile active site attacks the C1' of nucleotide 34 to detach the guanine base from the RNA, forming a covalent enzyme-RNA intermediate. The proton acceptor active site deprotonates the incoming PreQ1, allowing a nucleophilic attack on the C1' of the ribose to form the product. After dissociation, two additional enzymatic reactions on the tRNA convert PreQ1 to queuine (Q), resulting in the hypermodified nucleoside queuosine (7-(((4,5-cis-dihydroxy-2-cyclopenten-1-yl)amino)methyl)-7-deazaguanosine). This is Queuine tRNA-ribosyltransferase from Thermoanaerobacter sp. (strain X514).